Reading from the N-terminus, the 277-residue chain is ATP synthase subunit delta (277 aa).

It belongs to the ATPase delta chain family. F-type ATPases have 2 components, F(1) - the catalytic core - and F(0) - the membrane proton channel. F(1) has five subunits: alpha(3), beta(3), gamma(1), delta(1), epsilon(1). F(0) has three main subunits: a(1), b(2) and c(10-14). The alpha and beta chains form an alternating ring which encloses part of the gamma chain. F(1) is attached to F(0) by a central stalk formed by the gamma and epsilon chains, while a peripheral stalk is formed by the delta and b chains.

Its subcellular location is the cell membrane. Functionally, f(1)F(0) ATP synthase produces ATP from ADP in the presence of a proton or sodium gradient. F-type ATPases consist of two structural domains, F(1) containing the extramembraneous catalytic core and F(0) containing the membrane proton channel, linked together by a central stalk and a peripheral stalk. During catalysis, ATP synthesis in the catalytic domain of F(1) is coupled via a rotary mechanism of the central stalk subunits to proton translocation. In terms of biological role, this protein is part of the stalk that links CF(0) to CF(1). It either transmits conformational changes from CF(0) to CF(1) or is implicated in proton conduction. The polypeptide is ATP synthase subunit delta (Frankia alni (strain DSM 45986 / CECT 9034 / ACN14a)).